The sequence spans 826 residues: Periplasmic nitrate reductase (826 aa).

Positions 1–32 (MELNRRDFMKANAAIAAAAAAGITIPVKNVQA) form a signal peptide, tat-type signal. Residues 37–93 (IRWDKAPCRYCGTGCSVLVGTKDGRVVATQGDPDAEVNRGLNCIKGYFLSKIMYGAD) enclose the 4Fe-4S Mo/W bis-MGD-type domain. The [4Fe-4S] cluster site is built by Cys44, Cys47, Cys51, and Cys79. Residues Lys81, Gln148, Asn173, Cys177, 210-217 (WGSNMAEM), 241-245 (STYEH), 260-262 (QSD), Met370, Gln374, Asn480, 506-507 (SD), Lys529, Asp556, and 716-725 (TGRVLEHWHT) contribute to the Mo-bis(molybdopterin guanine dinucleotide) site. Phe792 provides a ligand contact to substrate. Residues Asn800 and Lys817 each coordinate Mo-bis(molybdopterin guanine dinucleotide).

This sequence belongs to the prokaryotic molybdopterin-containing oxidoreductase family. NasA/NapA/NarB subfamily. In terms of assembly, component of the periplasmic nitrate reductase NapAB complex composed of NapA and NapB. The cofactor is [4Fe-4S] cluster. Requires Mo-bis(molybdopterin guanine dinucleotide) as cofactor. Predicted to be exported by the Tat system. The position of the signal peptide cleavage has not been experimentally proven.

Its subcellular location is the periplasm. It catalyses the reaction 2 Fe(II)-[cytochrome] + nitrate + 2 H(+) = 2 Fe(III)-[cytochrome] + nitrite + H2O. Functionally, catalytic subunit of the periplasmic nitrate reductase complex NapAB. Receives electrons from NapB and catalyzes the reduction of nitrate to nitrite. In Actinobacillus succinogenes (strain ATCC 55618 / DSM 22257 / CCUG 43843 / 130Z), this protein is Periplasmic nitrate reductase.